The chain runs to 156 residues: ATP synthase subunit b (156 aa).

The helical transmembrane segment at 11–31 (AIAFAVFVWFCMKYVWPPLLA) threads the bilayer.

This sequence belongs to the ATPase B chain family. In terms of assembly, F-type ATPases have 2 components, F(1) - the catalytic core - and F(0) - the membrane proton channel. F(1) has five subunits: alpha(3), beta(3), gamma(1), delta(1), epsilon(1). F(0) has three main subunits: a(1), b(2) and c(10-14). The alpha and beta chains form an alternating ring which encloses part of the gamma chain. F(1) is attached to F(0) by a central stalk formed by the gamma and epsilon chains, while a peripheral stalk is formed by the delta and b chains.

Its subcellular location is the cell inner membrane. Functionally, f(1)F(0) ATP synthase produces ATP from ADP in the presence of a proton or sodium gradient. F-type ATPases consist of two structural domains, F(1) containing the extramembraneous catalytic core and F(0) containing the membrane proton channel, linked together by a central stalk and a peripheral stalk. During catalysis, ATP synthesis in the catalytic domain of F(1) is coupled via a rotary mechanism of the central stalk subunits to proton translocation. In terms of biological role, component of the F(0) channel, it forms part of the peripheral stalk, linking F(1) to F(0). The polypeptide is ATP synthase subunit b (Psychromonas ingrahamii (strain DSM 17664 / CCUG 51855 / 37)).